A 244-amino-acid chain; its full sequence is Uridylate kinase (244 aa).

Residue Lys-12–Gly-15 coordinates ATP. The involved in allosteric activation by GTP stretch occupies residues Gly-20–Gly-25. Residue Gly-54 coordinates UMP. ATP contacts are provided by Gly-55 and Arg-59. Residues Asp-74 and Ile-135–Thr-142 contribute to the UMP site. 3 residues coordinate ATP: Asn-163, Tyr-169, and Asp-172.

Belongs to the UMP kinase family. As to quaternary structure, homohexamer.

The protein resides in the cytoplasm. The catalysed reaction is UMP + ATP = UDP + ADP. It functions in the pathway pyrimidine metabolism; CTP biosynthesis via de novo pathway; UDP from UMP (UMPK route): step 1/1. With respect to regulation, allosterically activated by GTP. Inhibited by UTP. Its function is as follows. Catalyzes the reversible phosphorylation of UMP to UDP. The protein is Uridylate kinase of Streptococcus suis (strain 98HAH33).